A 141-amino-acid chain; its full sequence is Galactose-6-phosphate isomerase subunit LacA 1 (141 aa).

This sequence belongs to the LacAB/RpiB family. As to quaternary structure, heteromultimeric protein consisting of LacA and LacB.

It catalyses the reaction aldehydo-D-galactose 6-phosphate = keto-D-tagatose 6-phosphate. It functions in the pathway carbohydrate metabolism; D-galactose 6-phosphate degradation; D-tagatose 6-phosphate from D-galactose 6-phosphate: step 1/1. This chain is Galactose-6-phosphate isomerase subunit LacA 1, found in Streptococcus pyogenes serotype M3 (strain SSI-1).